The chain runs to 265 residues: Protein N-terminal and lysine N-methyltransferase EFM7 (265 aa).

Residues W55, 81–83 (GAA), D103, W141, and A169 contribute to the S-adenosyl-L-methionine site.

The protein belongs to the class I-like SAM-binding methyltransferase superfamily. EFM7 family.

The protein resides in the cytoplasm. S-adenosyl-L-methionine-dependent protein methyltransferase that trimethylates the N-terminal glycine 'Gly-2' of elongation factor 1-alpha, before also catalyzing the mono- and dimethylation of 'Lys-3'. The protein is Protein N-terminal and lysine N-methyltransferase EFM7 of Gibberella zeae (strain ATCC MYA-4620 / CBS 123657 / FGSC 9075 / NRRL 31084 / PH-1) (Wheat head blight fungus).